A 64-amino-acid chain; its full sequence is Putative antitoxin VapB4 (64 aa).

This sequence belongs to the UPF0165 family.

In terms of biological role, possibly the antitoxin component of a type II toxin-antitoxin (TA) system. Its cognate toxin is VapC4 (Potential). This Archaeoglobus fulgidus (strain ATCC 49558 / DSM 4304 / JCM 9628 / NBRC 100126 / VC-16) protein is Putative antitoxin VapB4 (vapB4).